Reading from the N-terminus, the 258-residue chain is Uridylate cyclase (258 aa).

The Guanylate cyclase domain occupies 50–190 (AAIFIDLRGS…DVVNKASKMC (141 aa)). Phe-53 lines the a ribonucleoside 5'-triphosphate pocket. The Mn(2+) site is built by Asp-55 and Asp-102.

The protein belongs to the adenylyl cyclase class-4/guanylyl cyclase family. Pyrimidine cyclase subfamily. Homodimer. Requires Mn(2+) as cofactor.

It is found in the cytoplasm. The catalysed reaction is UTP = 3',5'-cyclic UMP + diphosphate. Pycsar (pyrimidine cyclase system for antiphage resistance) provides immunity against bacteriophage. The pyrimidine cyclase (PycC) synthesizes cyclic nucleotides in response to infection; these serve as specific second messenger signals. The signals activate the adjacent effector, leading to bacterial cell death and abortive phage infection. A clade C Pycsar system. In terms of biological role, the pyrimidine cyclase gene of a two-gene Pycsar system, weakly generates cyclic UMP (cUMP) from UTP, has little to no activity on ATP, CTP or GTP. Expression of this and adjacent effector GmPycTM (AC P0DV43) probably confers resistance to bacteriophage. The genes are probably only expressed in response to bacteriophage infection. The sequence is that of Uridylate cyclase from Gulbenkiania mobilis.